Here is a 506-residue protein sequence, read N- to C-terminus: Nostrin (506 aa).

The region spanning 1–260 (MRDPLTDCPY…AISKIDIEKD (260 aa)) is the F-BAR domain. Ser114 carries the phosphoserine modification. A coiled-coil region spans residues 160–222 (SMTEKEKRKL…LELEKERIQL (63 aa)). In terms of domain architecture, REM-1 spans 292-372 (AMDKERRKSL…SYKLSSMLAE (81 aa)). Residues 438-497 (LSSRLCKALYSFQARQDDELNLEKGDIVIIHEKKEGGWWFGSLNGKKGHFPAAYVEELPS) form the SH3 domain. Position 479 is a phosphoserine (Ser479).

As to quaternary structure, homotrimer. Interacts with DAB2. Interacts with NOS3, DNM2, WASL and CAV1. Interacts (via SH3 domain) with DNM2; this interaction allows the recruitment of NOS3 to dynamin-positive structures. Expressed at highest levels in heart, kidney, placenta and lung, and at lowest levels in brain, thymus and spleen. Present in vascular endothelial cells and placenta. Over-expressed in placenta from women with pre-eclampsia (at protein level).

Its subcellular location is the cell membrane. The protein localises to the cytoplasmic vesicle. It localises to the cytoplasm. The protein resides in the cytoskeleton. It is found in the nucleus. Its function is as follows. Multivalent adapter protein which may decrease NOS3 activity by inducing its translocation away from the plasma membrane. This is Nostrin from Homo sapiens (Human).